The sequence spans 262 residues: Short-chain Z-isoprenyl diphosphate synthase (262 aa).

D40 is an active-site residue. Residue D40 coordinates Mg(2+). Residues 41-44 (GNRR), W45, and 86-88 (STE) each bind substrate. N89 functions as the Proton acceptor in the catalytic mechanism. Residues R92, R211, and 217–219 (RLS) each bind substrate. Mg(2+) is bound at residue E230.

Belongs to the UPP synthase family. Z-FPP synthase subfamily. The cofactor is Mg(2+).

It carries out the reaction isopentenyl diphosphate + (2E)-geranyl diphosphate = (2Z,6E)-farnesyl diphosphate + diphosphate. It participates in phospholipid metabolism; decaprenyl phosphate biosynthesis. In terms of biological role, generates Z-farnesyl diphosphate (Z-FPP) from isopentenyl pyrophosphate (IPP). Z-FPP is the precursor of decaprenyl diphosphate, which has a central role in the biosynthesis of the mycobacterial cell wall. This chain is Short-chain Z-isoprenyl diphosphate synthase, found in Mycobacterium bovis (strain ATCC BAA-935 / AF2122/97).